The chain runs to 369 residues: 3-dehydroquinate synthase (369 aa).

NAD(+)-binding positions include 72 to 77 (SGEKEK), 130 to 131 (TT), lysine 142, and lysine 151. Zn(2+)-binding residues include glutamate 184, histidine 247, and histidine 264.

Belongs to the sugar phosphate cyclases superfamily. Dehydroquinate synthase family. Co(2+) is required as a cofactor. It depends on Zn(2+) as a cofactor. The cofactor is NAD(+).

It localises to the cytoplasm. It catalyses the reaction 7-phospho-2-dehydro-3-deoxy-D-arabino-heptonate = 3-dehydroquinate + phosphate. Its pathway is metabolic intermediate biosynthesis; chorismate biosynthesis; chorismate from D-erythrose 4-phosphate and phosphoenolpyruvate: step 2/7. Catalyzes the conversion of 3-deoxy-D-arabino-heptulosonate 7-phosphate (DAHP) to dehydroquinate (DHQ). The sequence is that of 3-dehydroquinate synthase from Bacillus cytotoxicus (strain DSM 22905 / CIP 110041 / 391-98 / NVH 391-98).